Consider the following 360-residue polypeptide: Protein phosphatase 1 regulatory subunit 7 (360 aa).

The tract at residues 1 to 64 (MAAERGAGQQ…GEEDPEEEHE (64 aa)) is disordered. A2 is modified (N-acetylalanine). S12, S24, S27, S44, and S47 each carry phosphoserine. Residues 17 to 34 (EVDRRVESEESGDEEGKK) are compositionally biased toward basic and acidic residues. Residues 53 to 63 (ERGEEDPEEEH) show a composition bias toward acidic residues. 11 LRR repeats span residues 77–98 (DAED…EVLK), 99–120 (KVKT…EELQ), 121–142 (SLRE…EALT), 143–164 (ELEI…DKLT), 165–186 (RLKK…SNLH), 187–208 (QLQM…DTLT), 209–230 (NLES…DALT), 231–252 (NLTV…QNLV), 253–274 (NLRE…ENNN), 275–296 (KLTM…SHLT), and 297–318 (ELQE…DELK). S322 carries the phosphoserine modification. Residues 331–360 (NPLQKDPQYRRKVMLALPSVRQIDATFVRF) enclose the LRRCT domain.

Belongs to the SDS22 family. As to quaternary structure, interacts with PPP1CA, PPP1CB and PPP1CC/PPP1G isoform 1. In terms of tissue distribution, widely expressed.

The protein resides in the nucleus. Regulatory subunit of protein phosphatase 1. This Homo sapiens (Human) protein is Protein phosphatase 1 regulatory subunit 7 (PPP1R7).